The sequence spans 468 residues: ATP synthase subunit beta (468 aa).

155–162 (GGAGVGKT) serves as a coordination point for ATP.

The protein belongs to the ATPase alpha/beta chains family. F-type ATPases have 2 components, CF(1) - the catalytic core - and CF(0) - the membrane proton channel. CF(1) has five subunits: alpha(3), beta(3), gamma(1), delta(1), epsilon(1). CF(0) has three main subunits: a(1), b(2) and c(9-12). The alpha and beta chains form an alternating ring which encloses part of the gamma chain. CF(1) is attached to CF(0) by a central stalk formed by the gamma and epsilon chains, while a peripheral stalk is formed by the delta and b chains.

The protein resides in the cell membrane. The enzyme catalyses ATP + H2O + 4 H(+)(in) = ADP + phosphate + 5 H(+)(out). Produces ATP from ADP in the presence of a proton gradient across the membrane. The catalytic sites are hosted primarily by the beta subunits. This is ATP synthase subunit beta from Streptococcus thermophilus (strain ATCC BAA-250 / LMG 18311).